The sequence spans 270 residues: Oxidoreductase NAD-binding domain-containing protein 1 (270 aa).

The 104-residue stretch at 20–123 folds into the FAD-binding FR-type domain; the sequence is MELFSARVCD…VGGNFYFDPQ (104 aa). Residue 137-142 coordinates NAD(+); sequence GVGINP.

In Danio rerio (Zebrafish), this protein is Oxidoreductase NAD-binding domain-containing protein 1 (oxnad1).